The chain runs to 292 residues: Acetyl-coenzyme A carboxylase carboxyl transferase subunit beta (292 aa).

Residues 35–292 (VFSQCEQCNS…LKLHAKKVTS (258 aa)) form the CoA carboxyltransferase N-terminal domain. 4 residues coordinate Zn(2+): C39, C42, C58, and C61. The segment at 39–61 (CEQCNSAIYNKDLEHNYEVCPYC) adopts a C4-type zinc-finger fold.

Belongs to the AccD/PCCB family. As to quaternary structure, acetyl-CoA carboxylase is a heterohexamer composed of biotin carboxyl carrier protein (AccB), biotin carboxylase (AccC) and two subunits each of ACCase subunit alpha (AccA) and ACCase subunit beta (AccD). Zn(2+) serves as cofactor.

The protein resides in the cytoplasm. It catalyses the reaction N(6)-carboxybiotinyl-L-lysyl-[protein] + acetyl-CoA = N(6)-biotinyl-L-lysyl-[protein] + malonyl-CoA. It functions in the pathway lipid metabolism; malonyl-CoA biosynthesis; malonyl-CoA from acetyl-CoA: step 1/1. Its function is as follows. Component of the acetyl coenzyme A carboxylase (ACC) complex. Biotin carboxylase (BC) catalyzes the carboxylation of biotin on its carrier protein (BCCP) and then the CO(2) group is transferred by the transcarboxylase to acetyl-CoA to form malonyl-CoA. This is Acetyl-coenzyme A carboxylase carboxyl transferase subunit beta from Acholeplasma laidlawii (strain PG-8A).